The chain runs to 262 residues: 1-(5-phosphoribosyl)-5-[(5-phosphoribosylamino)methylideneamino] imidazole-4-carboxamide isomerase (262 aa).

Residue D8 is the Proton acceptor of the active site. D130 (proton donor) is an active-site residue.

Belongs to the HisA/HisF family.

It localises to the cytoplasm. It carries out the reaction 1-(5-phospho-beta-D-ribosyl)-5-[(5-phospho-beta-D-ribosylamino)methylideneamino]imidazole-4-carboxamide = 5-[(5-phospho-1-deoxy-D-ribulos-1-ylimino)methylamino]-1-(5-phospho-beta-D-ribosyl)imidazole-4-carboxamide. It participates in amino-acid biosynthesis; L-histidine biosynthesis; L-histidine from 5-phospho-alpha-D-ribose 1-diphosphate: step 4/9. The chain is 1-(5-phosphoribosyl)-5-[(5-phosphoribosylamino)methylideneamino] imidazole-4-carboxamide isomerase from Chloroherpeton thalassium (strain ATCC 35110 / GB-78).